The primary structure comprises 423 residues: Phosphoribosylamine--glycine ligase (423 aa).

Positions 107-314 (KAFMAKYNIP…LSDLVEAAID (208 aa)) constitute an ATP-grasp domain. 133 to 194 (VNQKGAPIVI…EDFLQGEEAS (62 aa)) serves as a coordination point for ATP. E284 and N286 together coordinate Mg(2+).

It belongs to the GARS family. It depends on Mg(2+) as a cofactor. Mn(2+) serves as cofactor.

It carries out the reaction 5-phospho-beta-D-ribosylamine + glycine + ATP = N(1)-(5-phospho-beta-D-ribosyl)glycinamide + ADP + phosphate + H(+). The protein operates within purine metabolism; IMP biosynthesis via de novo pathway; N(1)-(5-phospho-D-ribosyl)glycinamide from 5-phospho-alpha-D-ribose 1-diphosphate: step 2/2. The polypeptide is Phosphoribosylamine--glycine ligase (Neisseria meningitidis serogroup B (strain ATCC BAA-335 / MC58)).